The primary structure comprises 324 residues: Thiazole synthase (324 aa).

K167 acts as the Schiff-base intermediate with DXP in catalysis. Residues G228, 254–255, and 276–277 contribute to the 1-deoxy-D-xylulose 5-phosphate site; these read AG and NT.

It belongs to the ThiG family. Homotetramer. Forms heterodimers with either ThiH or ThiS.

Its subcellular location is the cytoplasm. It catalyses the reaction [ThiS sulfur-carrier protein]-C-terminal-Gly-aminoethanethioate + 2-iminoacetate + 1-deoxy-D-xylulose 5-phosphate = [ThiS sulfur-carrier protein]-C-terminal Gly-Gly + 2-[(2R,5Z)-2-carboxy-4-methylthiazol-5(2H)-ylidene]ethyl phosphate + 2 H2O + H(+). It functions in the pathway cofactor biosynthesis; thiamine diphosphate biosynthesis. Catalyzes the rearrangement of 1-deoxy-D-xylulose 5-phosphate (DXP) to produce the thiazole phosphate moiety of thiamine. Sulfur is provided by the thiocarboxylate moiety of the carrier protein ThiS. In vitro, sulfur can be provided by H(2)S. The sequence is that of Thiazole synthase from Paramagnetospirillum magneticum (strain ATCC 700264 / AMB-1) (Magnetospirillum magneticum).